We begin with the raw amino-acid sequence, 417 residues long: Serine hydroxymethyltransferase (417 aa).

(6S)-5,6,7,8-tetrahydrofolate is bound by residues Leu-120 and 124 to 126 (GHL). An N6-(pyridoxal phosphate)lysine modification is found at Lys-229.

It belongs to the SHMT family. As to quaternary structure, homodimer. The cofactor is pyridoxal 5'-phosphate.

The protein resides in the cytoplasm. The catalysed reaction is (6R)-5,10-methylene-5,6,7,8-tetrahydrofolate + glycine + H2O = (6S)-5,6,7,8-tetrahydrofolate + L-serine. Its pathway is one-carbon metabolism; tetrahydrofolate interconversion. It functions in the pathway amino-acid biosynthesis; glycine biosynthesis; glycine from L-serine: step 1/1. In terms of biological role, catalyzes the reversible interconversion of serine and glycine with tetrahydrofolate (THF) serving as the one-carbon carrier. This reaction serves as the major source of one-carbon groups required for the biosynthesis of purines, thymidylate, methionine, and other important biomolecules. Also exhibits THF-independent aldolase activity toward beta-hydroxyamino acids, producing glycine and aldehydes, via a retro-aldol mechanism. The sequence is that of Serine hydroxymethyltransferase from Anaeromyxobacter sp. (strain Fw109-5).